Here is a 146-residue protein sequence, read N- to C-terminus: Hemoglobin subunit beta (146 aa).

Val1 is modified (N-acetylvaline). In terms of domain architecture, Globin spans 2–146 (HLTGEEKTAV…VANALAHKYH (145 aa)). Thr12 is modified (phosphothreonine). Ser44 is modified (phosphoserine). At Lys59 the chain carries N6-acetyllysine. A heme b-binding site is contributed by His63. Lys82 carries the post-translational modification N6-acetyllysine. His92 contributes to the heme b binding site. Position 93 is an S-nitrosocysteine (Cys93). The residue at position 144 (Lys144) is an N6-acetyllysine.

This sequence belongs to the globin family. As to quaternary structure, heterotetramer of two alpha chains and two beta chains. As to expression, red blood cells.

Functionally, involved in oxygen transport from the lung to the various peripheral tissues. The sequence is that of Hemoglobin subunit beta (HBB) from Nasua nasua (Ring-tailed coati).